Here is a 438-residue protein sequence, read N- to C-terminus: LIM domain-containing protein C4F6.12 (438 aa).

Disordered stretches follow at residues 1 to 37 and 49 to 78; these read MHSP…NNLV and TGGR…TIKQ. Residues 24–37 show a composition bias toward polar residues; the sequence is SPVSTNGSPLNNLV. 2 positions are modified to phosphoserine: Ser-67 and Ser-96. LIM zinc-binding domains lie at 256 to 316, 318 to 375, and 376 to 435; these read KSCH…QFSP, CKHC…NKYA, and VKCK…SVKF.

In Schizosaccharomyces pombe (strain 972 / ATCC 24843) (Fission yeast), this protein is LIM domain-containing protein C4F6.12.